A 101-amino-acid polypeptide reads, in one-letter code: Small ribosomal subunit protein uS14 (101 aa).

A compositionally biased stretch (basic and acidic residues) spans 1 to 11 (MAKKSSVEKNN). Residues 1–22 (MAKKSSVEKNNRRQRMVKNAAA) are disordered. Positions 12-22 (RRQRMVKNAAA) are enriched in basic residues.

It belongs to the universal ribosomal protein uS14 family. Part of the 30S ribosomal subunit. Contacts proteins S3 and S10.

Functionally, binds 16S rRNA, required for the assembly of 30S particles and may also be responsible for determining the conformation of the 16S rRNA at the A site. The sequence is that of Small ribosomal subunit protein uS14 from Afipia carboxidovorans (strain ATCC 49405 / DSM 1227 / KCTC 32145 / OM5) (Oligotropha carboxidovorans).